We begin with the raw amino-acid sequence, 348 residues long: Lipoyl synthase (348 aa).

[4Fe-4S] cluster-binding residues include Cys55, Cys60, Cys66, Cys81, Cys85, Cys88, and Ser292. The Radical SAM core domain maps to 67 to 281 (WESREATFLI…ADAAKEMGFA (215 aa)).

This sequence belongs to the radical SAM superfamily. Lipoyl synthase family. Requires [4Fe-4S] cluster as cofactor.

The protein resides in the cytoplasm. The catalysed reaction is [[Fe-S] cluster scaffold protein carrying a second [4Fe-4S](2+) cluster] + N(6)-octanoyl-L-lysyl-[protein] + 2 oxidized [2Fe-2S]-[ferredoxin] + 2 S-adenosyl-L-methionine + 4 H(+) = [[Fe-S] cluster scaffold protein] + N(6)-[(R)-dihydrolipoyl]-L-lysyl-[protein] + 4 Fe(3+) + 2 hydrogen sulfide + 2 5'-deoxyadenosine + 2 L-methionine + 2 reduced [2Fe-2S]-[ferredoxin]. The protein operates within protein modification; protein lipoylation via endogenous pathway; protein N(6)-(lipoyl)lysine from octanoyl-[acyl-carrier-protein]: step 2/2. Catalyzes the radical-mediated insertion of two sulfur atoms into the C-6 and C-8 positions of the octanoyl moiety bound to the lipoyl domains of lipoate-dependent enzymes, thereby converting the octanoylated domains into lipoylated derivatives. The protein is Lipoyl synthase of Corynebacterium glutamicum (strain R).